The chain runs to 190 residues: CASP-like protein 5A3 (190 aa).

Composition is skewed to low complexity over residues 1–12 and 20–31; these read MRASRPAVHPVE and AAAEGPEAQVEG. A disordered region spans residues 1–31; it reads MRASRPAVHPVEAAPPPPAAAAEGPEAQVEG. Topologically, residues 1–50 are cytoplasmic; that stretch reads MRASRPAVHPVEAAPPPPAAAAEGPEAQVEGAAHPRGVRMKDPPGAPGTP. Residues 51-71 form a helical membrane-spanning segment; that stretch reads AGLGLRLAQAFFAAAALAVMA. Residues 72 to 81 lie on the Extracellular side of the membrane; sequence STNDFPSVSA. A helical membrane pass occupies residues 82-102; sequence FSYLVAAAILQCLWSLLLAFV. The Cytoplasmic portion of the chain corresponds to 103–126; the sequence is DIYALLVKRSLRNARAVCIFTIGD. A helical transmembrane segment spans residues 127–147; that stretch reads GITGTITLGAACASAGITVLI. The Extracellular segment spans residues 148–164; it reads GNDLNICAENHCASFET. A helical transmembrane segment spans residues 165 to 185; it reads ATALAFISWFALAPSCILNFW. The Cytoplasmic segment spans residues 186–190; it reads SMASR.

This sequence belongs to the Casparian strip membrane proteins (CASP) family. Homodimer and heterodimers.

The protein resides in the cell membrane. The sequence is that of CASP-like protein 5A3 from Zea mays (Maize).